Reading from the N-terminus, the 363-residue chain is MHLSDFYFDLPDELIARYPKPERSSSRLLRLSGENGDISHHTFSDVYDLINEGDLLIFNNTRVIPARMYGRKASGGKIEVLIERVLTESRFLAHVRSSKAPKAGTELILGEDKLGEGKGVKAVMIGRQDALFELEITEKSTALLDILQKIGHMPLPPYIDRPDEDADQERYQTVYSKIPGAVAAPTAGLHFDEELLAKLKAKGVNFAFVTLHVGAGTFQPVRVNNIEEHHMHAEYVEVPQQVVDAIVATKAAGKRVIAVGTTSVRSVESAALAAQEKGFAQIIEPFFADTSIFIYPGKQFRVVDCLITNFHLPESTLIMLVSAFAGYKNTMNAYKSAVENRYRFFSYGDAMFITKNNHVKGLD.

It belongs to the QueA family. In terms of assembly, monomer.

The protein resides in the cytoplasm. It carries out the reaction 7-aminomethyl-7-carbaguanosine(34) in tRNA + S-adenosyl-L-methionine = epoxyqueuosine(34) in tRNA + adenine + L-methionine + 2 H(+). The protein operates within tRNA modification; tRNA-queuosine biosynthesis. Its function is as follows. Transfers and isomerizes the ribose moiety from AdoMet to the 7-aminomethyl group of 7-deazaguanine (preQ1-tRNA) to give epoxyqueuosine (oQ-tRNA). The chain is S-adenosylmethionine:tRNA ribosyltransferase-isomerase from Mannheimia succiniciproducens (strain KCTC 0769BP / MBEL55E).